A 404-amino-acid polypeptide reads, in one-letter code: S-adenosylmethionine synthase (404 aa).

Residue 139 to 144 coordinates ATP; sequence GKGSTD.

The protein belongs to the AdoMet synthase 2 family. Mg(2+) is required as a cofactor.

The catalysed reaction is L-methionine + ATP + H2O = S-adenosyl-L-methionine + phosphate + diphosphate. Its pathway is amino-acid biosynthesis; S-adenosyl-L-methionine biosynthesis; S-adenosyl-L-methionine from L-methionine: step 1/1. In terms of biological role, catalyzes the formation of S-adenosylmethionine from methionine and ATP. The chain is S-adenosylmethionine synthase from Saccharolobus islandicus (strain L.S.2.15 / Lassen #1) (Sulfolobus islandicus).